A 676-amino-acid chain; its full sequence is E3 ubiquitin-protein ligase ICP0 (676 aa).

Residues 13-52 (CCICLDAITGAARALPCLHAFCLACIRRWLEGRPTCPLCK) form an RING-type zinc finger. Disordered regions lie at residues 101–153 (DLTA…GGRA), 266–517 (HLIP…AGAQ), and 555–676 (AAIS…AWRQ). Residues 123-153 (EAGGGAGGAEEAGEARGAGAGRAAGAAGGRA) show a composition bias toward gly residues. Residues 286–303 (SDSDSEGSEDDSWSESEE) show a composition bias toward acidic residues. Residues 304–314 (SSSGLSTSDLT) show a composition bias toward low complexity. Over residues 315–328 (AIDDTETEPETDAE) the composition is skewed to acidic residues. Residues 351–361 (YVSTRGRQTPA) are compositionally biased toward polar residues. Composition is skewed to low complexity over residues 375–388 (GRAA…SSRS) and 397–411 (LPAA…QARA). The span at 422–439 (GAGLGVAAGETAGWGAGS) shows a compositional bias: gly residues. Positions 440–450 (EEGRGERRARL) are enriched in basic and acidic residues. The span at 474 to 484 (TPAPAPAPAPA) shows a compositional bias: pro residues. The span at 555–597 (AAISTRAPTPSPAGRAPAADPRRAGAPALAGAARAEVGRNGNP) shows a compositional bias: low complexity.

It belongs to the simplexviruses ICp0 family. In terms of processing, auto-ubiquitinated. Post-translationally, transactivation activity is possibly regulated through phosphorylation by casein kinase II.

It carries out the reaction S-ubiquitinyl-[E2 ubiquitin-conjugating enzyme]-L-cysteine + [acceptor protein]-L-lysine = [E2 ubiquitin-conjugating enzyme]-L-cysteine + N(6)-ubiquitinyl-[acceptor protein]-L-lysine.. Functionally, evades nuclear antiviral defenses triggered by dsDNA viruses. Acts during the initial stages of lytic infection and the reactivation of latent viral genome. Prevents the antiviral effect of nuclear bodies by degrading host PML and SP100. The polypeptide is E3 ubiquitin-protein ligase ICP0 (BICP0) (Bovine herpesvirus 1.1 (strain Cooper) (BoHV-1)).